The primary structure comprises 349 residues: tRNA pseudouridine synthase D (349 aa).

A substrate-binding site is contributed by Phe-27. The active-site Nucleophile is Asp-80. Asn-129 is a substrate binding site. One can recognise a TRUD domain in the interval 155 to 303; that stretch reads GVPNYFGAQR…VEAARRAMLL (149 aa). Phe-329 is a substrate binding site.

Belongs to the pseudouridine synthase TruD family.

The enzyme catalyses uridine(13) in tRNA = pseudouridine(13) in tRNA. In terms of biological role, responsible for synthesis of pseudouridine from uracil-13 in transfer RNAs. The sequence is that of tRNA pseudouridine synthase D from Escherichia fergusonii (strain ATCC 35469 / DSM 13698 / CCUG 18766 / IAM 14443 / JCM 21226 / LMG 7866 / NBRC 102419 / NCTC 12128 / CDC 0568-73).